Here is a 259-residue protein sequence, read N- to C-terminus: Imidazole glycerol phosphate synthase subunit HisF (259 aa).

Active-site residues include Asp-11 and Asp-130.

It belongs to the HisA/HisF family. In terms of assembly, heterodimer of HisH and HisF.

It is found in the cytoplasm. It catalyses the reaction 5-[(5-phospho-1-deoxy-D-ribulos-1-ylimino)methylamino]-1-(5-phospho-beta-D-ribosyl)imidazole-4-carboxamide + L-glutamine = D-erythro-1-(imidazol-4-yl)glycerol 3-phosphate + 5-amino-1-(5-phospho-beta-D-ribosyl)imidazole-4-carboxamide + L-glutamate + H(+). It participates in amino-acid biosynthesis; L-histidine biosynthesis; L-histidine from 5-phospho-alpha-D-ribose 1-diphosphate: step 5/9. Functionally, IGPS catalyzes the conversion of PRFAR and glutamine to IGP, AICAR and glutamate. The HisF subunit catalyzes the cyclization activity that produces IGP and AICAR from PRFAR using the ammonia provided by the HisH subunit. The sequence is that of Imidazole glycerol phosphate synthase subunit HisF from Variovorax paradoxus (strain S110).